The chain runs to 588 residues: Myc box-dependent-interacting protein 1 (588 aa).

N-acetylalanine is present on Ala-2. Positions 2 to 122 are interaction with BIN2; the sequence is AEMGSKGVTA…DYHQKLVDQA (121 aa). Coiled coils occupy residues 15–42 and 193–274; these read ASNV…TKDE and HLVA…EKQH. The 248-residue stretch at 29-276 folds into the BAR domain; sequence VLQKLGKADE…LVSLEKQHGS (248 aa). The disordered stretch occupies residues 279-355; that stretch reads FTVKAQPSDN…PKHTPSKEMK (77 aa). Residues Ser-296, Ser-298, and Ser-304 each carry the phosphoserine modification. Thr-308 is modified (phosphothreonine). Phosphoserine is present on residues Ser-324 and Ser-332. The interval 379-422 is clathrin-binding; the sequence is FEAPGPFSEQASLLDLDFEPLPPVASPVKAPTPSGQSIPWDLWE. The interval 448 to 484 is disordered; that stretch reads PSQTAEPGPAQPAEASEVVGGAQEPGETAASEATSSS. The segment covering 474 to 484 has biased composition (low complexity); sequence ETAASEATSSS. In terms of domain architecture, SH3 spans 515–588; sequence GFMFKVQAQH…FPENFTERVQ (74 aa).

As to quaternary structure, heterodimer with AMPH. Binds SH3GLB1. Interacts (via SH3 domain) with DNM1. Interacts with SYNJ1. Interacts (via SH3 domain) with DNM2. Interacts with CLTC. Interacts with AP2A2. Interacts with AP2B1. Interacts with MYC (via N-terminal transactivation domain); the interaction requires the integrity of the conserved MYC box regions 1 and 2. Interacts with BIN2. Interacts with SNX4. Interacts (via BAR domain) with BACE1. Binds (via BAR domain) F-actin. Phosphorylated by protein kinase C. As to expression, isoform 1 is expressed mainly in the brain. Isoform 2 is widely expressed.

Its subcellular location is the nucleus. It localises to the cytoplasm. The protein localises to the endosome. The protein resides in the cell membrane. It is found in the sarcolemma. Its subcellular location is the T-tubule. Functionally, is a key player in the control of plasma membrane curvature, and membrane shaping and remodeling. Required in muscle cells for the formation of T-tubules, tubular invaginations of the plasma membrane that function in depolarization-contraction coupling. Required in muscle cells for the formation of T-tubules, tubular invaginations of the plasma membrane that function in depolarization-contraction coupling. Is a negative regulator of endocytosis. Is also involved in the regulation of intracellular vesicles sorting, modulation of BACE1 trafficking and the control of amyloid-beta production. In neuronal circuits, endocytosis regulation may influence the internalization of PHF-tau aggregates. May be involved in the regulation of MYC activity and the control cell proliferation. This is Myc box-dependent-interacting protein 1 (Bin1) from Mus musculus (Mouse).